The chain runs to 347 residues: Phosphoribosylformylglycinamidine cyclo-ligase (347 aa).

The protein belongs to the AIR synthase family.

It is found in the cytoplasm. The catalysed reaction is 2-formamido-N(1)-(5-O-phospho-beta-D-ribosyl)acetamidine + ATP = 5-amino-1-(5-phospho-beta-D-ribosyl)imidazole + ADP + phosphate + H(+). It functions in the pathway purine metabolism; IMP biosynthesis via de novo pathway; 5-amino-1-(5-phospho-D-ribosyl)imidazole from N(2)-formyl-N(1)-(5-phospho-D-ribosyl)glycinamide: step 2/2. The polypeptide is Phosphoribosylformylglycinamidine cyclo-ligase (Prochlorococcus marinus (strain MIT 9215)).